The sequence spans 338 residues: Fusarubin cluster-specific transcription factor fsr6 (338 aa).

Residues 16-44 (CDACTTAKVRCSRTHPCERCEDNGQAKEC) constitute a DNA-binding region (zn(2)-C6 fungal-type).

The protein resides in the nucleus. Functionally, transcription factor that regulates the expression of the gene cluster that mediates the biosynthesis of fusarubins, highly pigmented naphthoquinones responsible for the coloration of the fruiting bodies. The sequence is that of Fusarubin cluster-specific transcription factor fsr6 from Gibberella fujikuroi (strain CBS 195.34 / IMI 58289 / NRRL A-6831) (Bakanae and foot rot disease fungus).